We begin with the raw amino-acid sequence, 525 residues long: Estrogen receptor (525 aa).

Positions 1–59 are disordered; it reads PTSPLVFVPSSPRLSPFMHPPSHHYLETTSTPVYRSSVSSSQQQLSREDQCGTSDDSYS. The modulating stretch occupies residues 1–82; that stretch reads PTSPLVFVPS…GFEMAKEMRF (82 aa). Residues 36–45 show a composition bias toward low complexity; the sequence is SSVSSSQQQL. 2 NR C4-type zinc fingers span residues 83–103 and 119–143; these read CAVC…CEGC and CPAT…LRKC. The nuclear receptor DNA-binding region spans 83 to 148; it reads CAVCSDYASG…RLRKCYQVGM (66 aa). The hinge stretch occupies residues 149 to 209; that stretch reads MKGGVRKDRG…GGGKSSIIGM (61 aa). Positions 154–182 are enriched in basic and acidic residues; sequence RKDRGRVLRRDKRRTGTSDKASKDLEHRT. Residues 154 to 203 form a disordered region; sequence RKDRGRVLRRDKRRTGTSDKASKDLEHRTAPPQDRRKHSSSSSSAGGGGK. The NR LBD domain occupies 210-446; that stretch reads SPDQVLLLLQ…DLLLEMLDAH (237 aa). The segment covering 452–465 has biased composition (basic and acidic residues); sequence DRPAESWSQADREP. A disordered region spans residues 452-525; it reads DRPAESWSQA…GPRSDCTHIL (74 aa). Residues 479-493 show a composition bias toward gly residues; it reads SGGGDGGPSSAGSGS.

Belongs to the nuclear hormone receptor family. NR3 subfamily. As to quaternary structure, binds DNA as a homodimer. Can form a heterodimer with ER-beta. As to expression, abundant in the liver, less abundant in the testes and barely detectable in the ovary and brain.

It localises to the nucleus. Its function is as follows. The steroid hormones and their receptors are involved in the regulation of eukaryotic gene expression and affect cellular proliferation and differentiation in target tissues. In Micropogonias undulatus (Atlantic croaker), this protein is Estrogen receptor (esr1).